A 372-amino-acid polypeptide reads, in one-letter code: Anhydro-N-acetylmuramic acid kinase (372 aa).

An ATP-binding site is contributed by 21–28 (GTSMDGVD).

Belongs to the anhydro-N-acetylmuramic acid kinase family.

The catalysed reaction is 1,6-anhydro-N-acetyl-beta-muramate + ATP + H2O = N-acetyl-D-muramate 6-phosphate + ADP + H(+). It functions in the pathway amino-sugar metabolism; 1,6-anhydro-N-acetylmuramate degradation. Its pathway is cell wall biogenesis; peptidoglycan recycling. In terms of biological role, catalyzes the specific phosphorylation of 1,6-anhydro-N-acetylmuramic acid (anhMurNAc) with the simultaneous cleavage of the 1,6-anhydro ring, generating MurNAc-6-P. Is required for the utilization of anhMurNAc either imported from the medium or derived from its own cell wall murein, and thus plays a role in cell wall recycling. This Bordetella avium (strain 197N) protein is Anhydro-N-acetylmuramic acid kinase.